A 681-amino-acid polypeptide reads, in one-letter code: Leucine-rich repeat, immunoglobulin-like domain and transmembrane domain-containing protein 3 (681 aa).

An N-terminal signal peptide occupies residues 1–19; sequence MWLSACLCLVLSFLGGVNG. Asparagine 18 carries N-linked (GlcNAc...) asparagine glycosylation. The Lumenal segment spans residues 20–584; it reads TCPSQCSCEY…RVEGRGSQWS (565 aa). 5 LRR repeats span residues 56 to 79, 80 to 103, 104 to 128, 129 to 151, and 152 to 175; these read PVDTSKLRIEKTVVRRLPAEAFYY, LVELQYLWLAYNSVASIETSSFYN, LRQLHELRLDGNSLTAFPWVSLLDM, PHLRTLDLHNNRIASVPNEAVRY, and LRNLTCLDLSSNRLTTLPPDFLDS. The region spanning 254-344 is the Ig-like domain; that stretch reads PSVMMSATKI…GISEAVVTVT (91 aa). The cysteines at positions 275 and 328 are disulfide-linked. Asparagine 296 is a glycosylation site (N-linked (GlcNAc...) asparagine). Disordered regions lie at residues 350–391 and 425–464; these read TTTL…GLTS and TSVQTSISGRTARTSHQPPLLHPGGKSNAKIEKNGRKFPP. Over residues 378 to 391 the composition is skewed to polar residues; the sequence is TPPSKSWLSPGLTS. N-linked (GlcNAc...) asparagine glycans are attached at residues asparagine 485 and asparagine 506. Residues 585–605 form a helical membrane-spanning segment; sequence LLLVVTSTACVIVVPLICFLL. The Cytoplasmic portion of the chain corresponds to 606 to 681; sequence YKVCKLQCTS…SDGCRTEYYG (76 aa).

Detected in the outer plexiform layer (OPL) of the retina, where it localizes to rod and cone ON-bipolar cells (at protein level). Also detected in bipolar cell bodies in the inner retinal layer (INL) (at protein level).

It is found in the cell projection. It localises to the dendrite. Its subcellular location is the perikaryon. The protein resides in the endoplasmic reticulum membrane. Its function is as follows. Plays a role in the synapse formation and synaptic transmission between cone photoreceptor cells and retinal bipolar cells. Required for normal transmission of a light-evoked stimulus from the cone photoreceptor cells to the ON-bipolar cells and ON-ganglion cells in the inner retina. Required in retinal ON-bipolar cells for normal localization of the cation channel TRPM1 at dendrite tips. Seems to play a specific role in synaptic contacts made by ON-bipolar cells with cone photoreceptor pedicles. May also have a role in cone synapse formation. Might facilitate FGFR1 exit from the endoplasmic reticulum to the Golgi. Could be a regulator of the FGFRs. This Mus musculus (Mouse) protein is Leucine-rich repeat, immunoglobulin-like domain and transmembrane domain-containing protein 3.